The primary structure comprises 150 residues: SsrA-binding protein (150 aa).

Belongs to the SmpB family.

The protein resides in the cytoplasm. Required for rescue of stalled ribosomes mediated by trans-translation. Binds to transfer-messenger RNA (tmRNA), required for stable association of tmRNA with ribosomes. tmRNA and SmpB together mimic tRNA shape, replacing the anticodon stem-loop with SmpB. tmRNA is encoded by the ssrA gene; the 2 termini fold to resemble tRNA(Ala) and it encodes a 'tag peptide', a short internal open reading frame. During trans-translation Ala-aminoacylated tmRNA acts like a tRNA, entering the A-site of stalled ribosomes, displacing the stalled mRNA. The ribosome then switches to translate the ORF on the tmRNA; the nascent peptide is terminated with the 'tag peptide' encoded by the tmRNA and targeted for degradation. The ribosome is freed to recommence translation, which seems to be the essential function of trans-translation. The chain is SsrA-binding protein from Bacteroides thetaiotaomicron (strain ATCC 29148 / DSM 2079 / JCM 5827 / CCUG 10774 / NCTC 10582 / VPI-5482 / E50).